A 247-amino-acid polypeptide reads, in one-letter code: DNA polymerase sliding clamp (247 aa).

It belongs to the PCNA family. In terms of assembly, homotrimer. The subunits circularize to form a toroid; DNA passes through its center. Replication factor C (RFC) is required to load the toroid on the DNA.

Functionally, sliding clamp subunit that acts as a moving platform for DNA processing. Responsible for tethering the catalytic subunit of DNA polymerase and other proteins to DNA during high-speed replication. This chain is DNA polymerase sliding clamp, found in Halobacterium salinarum (strain ATCC 29341 / DSM 671 / R1).